The following is a 169-amino-acid chain: Large ribosomal subunit protein uL10 (169 aa).

The protein belongs to the universal ribosomal protein uL10 family. As to quaternary structure, part of the ribosomal stalk of the 50S ribosomal subunit. The N-terminus interacts with L11 and the large rRNA to form the base of the stalk. The C-terminus forms an elongated spine to which L12 dimers bind in a sequential fashion forming a multimeric L10(L12)X complex.

Forms part of the ribosomal stalk, playing a central role in the interaction of the ribosome with GTP-bound translation factors. The protein is Large ribosomal subunit protein uL10 of Lactobacillus delbrueckii subsp. bulgaricus (strain ATCC 11842 / DSM 20081 / BCRC 10696 / JCM 1002 / NBRC 13953 / NCIMB 11778 / NCTC 12712 / WDCM 00102 / Lb 14).